The primary structure comprises 82 residues: Cell division topological specificity factor (82 aa).

It belongs to the MinE family.

Its function is as follows. Prevents the cell division inhibition by proteins MinC and MinD at internal division sites while permitting inhibition at polar sites. This ensures cell division at the proper site by restricting the formation of a division septum at the midpoint of the long axis of the cell. This Buchnera aphidicola subsp. Cinara cedri (strain Cc) protein is Cell division topological specificity factor.